Here is a 62-residue protein sequence, read N- to C-terminus: Large ribosomal subunit protein uL30 (62 aa).

The protein belongs to the universal ribosomal protein uL30 family. Part of the 50S ribosomal subunit.

The sequence is that of Large ribosomal subunit protein uL30 from Shouchella clausii (strain KSM-K16) (Alkalihalobacillus clausii).